The sequence spans 340 residues: Inactive hyaluronidase B (340 aa).

Disulfide bonds link cysteine 21–cysteine 310 and cysteine 187–cysteine 199. Asparagine 66 and asparagine 81 each carry an N-linked (GlcNAc...) asparagine glycan.

It belongs to the glycosyl hydrolase 56 family. Post-translationally, N-glycosylated on at least two Asn residues by identical heptasaccharide units composed of Man, GlcNAc, and Fuc residues in the molar ration of 3:2:2. As to expression, expressed by the venom gland.

Its subcellular location is the secreted. Has no hyaluronidase activity. This is Inactive hyaluronidase B from Vespula vulgaris (Yellow jacket).